The sequence spans 157 residues: Small ribosomal subunit protein uS7 (157 aa).

Belongs to the universal ribosomal protein uS7 family. In terms of assembly, part of the 30S ribosomal subunit. Contacts proteins S9 and S11.

Its function is as follows. One of the primary rRNA binding proteins, it binds directly to 16S rRNA where it nucleates assembly of the head domain of the 30S subunit. Is located at the subunit interface close to the decoding center, probably blocks exit of the E-site tRNA. The polypeptide is Small ribosomal subunit protein uS7 (Rhodopirellula baltica (strain DSM 10527 / NCIMB 13988 / SH1)).